Here is a 124-residue protein sequence, read N- to C-terminus: MATVNQLVRKPRAPKVDKTNVPALNACPQKRGVCTRVYTTTPKKPNSALRKVARVRLTNGFEVTSYIGGEGHNLQEHSVILIRGGRVKDLPGVRYHTIRGALDCAGVTSRRQSRSKYGAKRPKS.

D89 is modified (3-methylthioaspartic acid).

It belongs to the universal ribosomal protein uS12 family. In terms of assembly, part of the 30S ribosomal subunit. Contacts proteins S8 and S17. May interact with IF1 in the 30S initiation complex.

Functionally, with S4 and S5 plays an important role in translational accuracy. Its function is as follows. Interacts with and stabilizes bases of the 16S rRNA that are involved in tRNA selection in the A site and with the mRNA backbone. Located at the interface of the 30S and 50S subunits, it traverses the body of the 30S subunit contacting proteins on the other side and probably holding the rRNA structure together. The combined cluster of proteins S8, S12 and S17 appears to hold together the shoulder and platform of the 30S subunit. The chain is Small ribosomal subunit protein uS12 from Shewanella baltica (strain OS223).